We begin with the raw amino-acid sequence, 167 residues long: Bacterial non-heme ferritin-like protein (167 aa).

Positions 1-145 (MATAGMLLKL…TILDEVRSAK (145 aa)) constitute a Ferritin-like diiron domain.

This sequence belongs to the ferritin family. Prokaryotic subfamily.

The protein localises to the cytoplasm. This is Bacterial non-heme ferritin-like protein (ftnB) from Escherichia coli O157:H7.